Reading from the N-terminus, the 444-residue chain is Argininosuccinate synthase (444 aa).

ATP contacts are provided by residues 18–26 (AFSGGLDTS) and A44. Residue Y100 participates in L-citrulline binding. ATP is bound by residues G130 and T132. L-aspartate is bound by residues T132, N136, and D137. An L-citrulline-binding site is contributed by N136. D137 is an ATP binding site. 2 residues coordinate L-citrulline: R140 and S193. D195 lines the ATP pocket. Positions 202, 204, and 281 each coordinate L-citrulline.

It belongs to the argininosuccinate synthase family. Type 2 subfamily. In terms of assembly, homotetramer.

Its subcellular location is the cytoplasm. The enzyme catalyses L-citrulline + L-aspartate + ATP = 2-(N(omega)-L-arginino)succinate + AMP + diphosphate + H(+). It functions in the pathway amino-acid biosynthesis; L-arginine biosynthesis; L-arginine from L-ornithine and carbamoyl phosphate: step 2/3. This Histophilus somni (strain 129Pt) (Haemophilus somnus) protein is Argininosuccinate synthase.